Reading from the N-terminus, the 319-residue chain is Acetyl-coenzyme A carboxylase carboxyl transferase subunit alpha (319 aa).

The CoA carboxyltransferase C-terminal domain occupies 35-296 (NIDEEVHRLR…KAQLLADLAD (262 aa)).

It belongs to the AccA family. As to quaternary structure, acetyl-CoA carboxylase is a heterohexamer composed of biotin carboxyl carrier protein (AccB), biotin carboxylase (AccC) and two subunits each of ACCase subunit alpha (AccA) and ACCase subunit beta (AccD).

Its subcellular location is the cytoplasm. The catalysed reaction is N(6)-carboxybiotinyl-L-lysyl-[protein] + acetyl-CoA = N(6)-biotinyl-L-lysyl-[protein] + malonyl-CoA. It participates in lipid metabolism; malonyl-CoA biosynthesis; malonyl-CoA from acetyl-CoA: step 1/1. Functionally, component of the acetyl coenzyme A carboxylase (ACC) complex. First, biotin carboxylase catalyzes the carboxylation of biotin on its carrier protein (BCCP) and then the CO(2) group is transferred by the carboxyltransferase to acetyl-CoA to form malonyl-CoA. This chain is Acetyl-coenzyme A carboxylase carboxyl transferase subunit alpha, found in Shigella sonnei (strain Ss046).